A 114-amino-acid polypeptide reads, in one-letter code: UPF0342 protein SE_1526 (114 aa).

This sequence belongs to the UPF0342 family.

This Staphylococcus epidermidis (strain ATCC 12228 / FDA PCI 1200) protein is UPF0342 protein SE_1526.